A 366-amino-acid chain; its full sequence is Probable quinol oxidase subunit 2 (366 aa).

A signal peptide spans 1–19 (MSKFKSLLLLFGTLILLSG). Cysteine 20 carries the N-palmitoyl cysteine lipid modification. A lipid anchor (S-diacylglycerol cysteine) is attached at cysteine 20. The next 2 helical transmembrane spans lie at 38 to 58 (FLIL…LGMF) and 80 to 100 (AIIE…LAIP). Residues 330–366 (EPYNNEFKKDESKNAKEMKKISKDAQDQDNDDHGGGH) are disordered. Residues 335–366 (EFKKDESKNAKEMKKISKDAQDQDNDDHGGGH) are compositionally biased toward basic and acidic residues.

The protein belongs to the cytochrome c oxidase subunit 2 family.

Its subcellular location is the cell membrane. It catalyses the reaction 2 a quinol + O2 = 2 a quinone + 2 H2O. Functionally, catalyzes quinol oxidation with the concomitant reduction of oxygen to water. Subunit II transfers the electrons from a quinol to the binuclear center of the catalytic subunit I. The polypeptide is Probable quinol oxidase subunit 2 (qoxA) (Staphylococcus aureus (strain bovine RF122 / ET3-1)).